A 194-amino-acid polypeptide reads, in one-letter code: Imidazoleglycerol-phosphate dehydratase (194 aa).

This sequence belongs to the imidazoleglycerol-phosphate dehydratase family.

Its subcellular location is the cytoplasm. It carries out the reaction D-erythro-1-(imidazol-4-yl)glycerol 3-phosphate = 3-(imidazol-4-yl)-2-oxopropyl phosphate + H2O. Its pathway is amino-acid biosynthesis; L-histidine biosynthesis; L-histidine from 5-phospho-alpha-D-ribose 1-diphosphate: step 6/9. The sequence is that of Imidazoleglycerol-phosphate dehydratase from Clostridium kluyveri (strain NBRC 12016).